The chain runs to 150 residues: Large ribosomal subunit protein bL9 (150 aa).

The protein belongs to the bacterial ribosomal protein bL9 family.

Functionally, binds to the 23S rRNA. This Burkholderia multivorans (strain ATCC 17616 / 249) protein is Large ribosomal subunit protein bL9.